We begin with the raw amino-acid sequence, 298 residues long: Mitochondrial intermembrane space import and assembly protein 40 (298 aa).

Residues 1–33 constitute a mitochondrion transit peptide; the sequence is MYRTALRPSQSALRAIRSTTSPSALVSSGARRF. Residues 34–52 are Mitochondrial matrix-facing; it reads ASTTSAPKKKSTWKGAAVR. The chain crosses the membrane as a helical; Signal-anchor for type II membrane protein span at residues 53–69; sequence WGLAVAAVYYYNTSPIF. Over 70–298 the chain is Mitochondrial intermembrane; sequence SDELPETAGT…TAANNNKKQQ (229 aa). Residues 101–159 are disordered; the sequence is RQAAEHAAARKAAQAAAKAAATPATPSESVEEQITKAEAEAEAVPEGDSKPRSESTEGV. Residues 110–121 are compositionally biased toward low complexity; that stretch reads RKAAQAAAKAAA. 3 disulfide bridges follow: Cys191–Cys193, Cys202–Cys235, and Cys212–Cys225. The CHCH domain occupies 199 to 243; that stretch reads HGPCGEEFKAAFSCFVYSTEEPKGMDCIEKFSHMQDCFRKYPEVY. 2 consecutive short sequence motifs (cx9C motif) follow at residues 202 to 212 and 225 to 235; these read CGEEFKAAFSC and CIEKFSHMQDC. Residues 248-298 form a disordered region; that stretch reads ADDEEAERASAAAPAAEGTPAKEEPVENKKEEALEPATHDATAANNNKKQQ. Positions 256-266 are enriched in low complexity; sequence ASAAAPAAEGT. A compositionally biased stretch (basic and acidic residues) spans 267–280; sequence PAKEEPVENKKEEA.

In terms of assembly, monomer. Cu(2+) serves as cofactor. The cofactor is Zn(2+).

It localises to the mitochondrion inner membrane. Required for the import and folding of small cysteine-containing proteins (small Tim) in the mitochondrial intermembrane space (IMS). Forms a redox cycle with ERV1 that involves a disulfide relay system. Precursor proteins to be imported into the IMS are translocated in their reduced form into the mitochondria. The oxidized form of MIA40 forms a transient intermolecular disulfide bridge with the reduced precursor protein, resulting in oxidation of the precursor protein that now contains an intramolecular disulfide bond and is able to undergo folding in the IMS. This chain is Mitochondrial intermembrane space import and assembly protein 40 (mia-40), found in Neurospora crassa (strain ATCC 24698 / 74-OR23-1A / CBS 708.71 / DSM 1257 / FGSC 987).